Reading from the N-terminus, the 177-residue chain is Large ribosomal subunit protein uL6 (177 aa).

The protein belongs to the universal ribosomal protein uL6 family. In terms of assembly, part of the 50S ribosomal subunit.

This protein binds to the 23S rRNA, and is important in its secondary structure. It is located near the subunit interface in the base of the L7/L12 stalk, and near the tRNA binding site of the peptidyltransferase center. The protein is Large ribosomal subunit protein uL6 of Paramagnetospirillum magneticum (strain ATCC 700264 / AMB-1) (Magnetospirillum magneticum).